Reading from the N-terminus, the 300-residue chain is Sulfate adenylyltransferase subunit 2 (300 aa).

The segment at R281 to F300 is disordered.

It belongs to the PAPS reductase family. CysD subfamily. As to quaternary structure, heterodimer composed of CysD, the smaller subunit, and CysN.

It catalyses the reaction sulfate + ATP + H(+) = adenosine 5'-phosphosulfate + diphosphate. It participates in sulfur metabolism; hydrogen sulfide biosynthesis; sulfite from sulfate: step 1/3. Functionally, with CysN forms the ATP sulfurylase (ATPS) that catalyzes the adenylation of sulfate producing adenosine 5'-phosphosulfate (APS) and diphosphate, the first enzymatic step in sulfur assimilation pathway. APS synthesis involves the formation of a high-energy phosphoric-sulfuric acid anhydride bond driven by GTP hydrolysis by CysN coupled to ATP hydrolysis by CysD. This Brucella canis (strain ATCC 23365 / NCTC 10854 / RM-666) protein is Sulfate adenylyltransferase subunit 2.